Reading from the N-terminus, the 102-residue chain is uncharacterized protein (102 aa).

This is an uncharacterized protein from Sulfolobus spindle-shape virus 1 (SSV1).